We begin with the raw amino-acid sequence, 337 residues long: MKKFLPLSISITVLAACSSHTPAPVENAKDLAPSIIKPINGTNSTAWEPQVIQQKMPESMRVPKATNSTYQPEIIQQNQQKTESIAKKQALQNFEIPRDPKTNVPVYSKIDKGFYKGDTYKVRKGDTMFLIAYISGMDIKELATLNNMSEPYHLSIGQVLKIANNIPDSNMIPTQTINESEVTQNTVNETWNANKPTNEQMKPVATPTHSTMPINKTPPATSNIAWIWPTNGKIIQGFSSADGGNKGIDISGSRGQAVNAAAAGRVVYAGDALRGYGNLIIIKHNDSYLSAYAHNESILVKDQQEVKAGQQIAKMGSSGTNTIKLHFXIRYFGQSVD.

An N-terminal signal peptide occupies residues 1-16; that stretch reads MKKFLPLSISITVLAA. Cys17 carries N-palmitoyl cysteine lipidation. Cys17 carries the S-diacylglycerol cysteine lipid modification. One can recognise a LysM domain in the interval 118-162; sequence DTYKVRKGDTMFLIAYISGMDIKELATLNNMSEPYHLSIGQVLKI. A disordered region spans residues 192 to 215; sequence NANKPTNEQMKPVATPTHSTMPIN.

The protein belongs to the E.coli NlpD/Haemophilus LppB family.

It is found in the cell outer membrane. In terms of biological role, may be a virulence determinant. This chain is Outer membrane antigenic lipoprotein B (lppB), found in Histophilus somni (Haemophilus somnus).